Consider the following 352-residue polypeptide: Photosystem II D2 protein (352 aa).

Thr-2 bears the N-acetylthreonine mark. Thr-2 carries the phosphothreonine modification. A helical transmembrane segment spans residues Thr-40–Thr-60. A chlorophyll a-binding site is contributed by His-117. Residues Gly-124–Pro-140 traverse the membrane as a helical segment. Residues Gln-129 and Asn-142 each contribute to the pheophytin a site. The chain crosses the membrane as a helical span at residues Val-152 to Ser-165. His-197 provides a ligand contact to chlorophyll a. Residues Ala-207–Asp-227 form a helical membrane-spanning segment. The a plastoquinone site is built by His-214 and Phe-261. His-214 provides a ligand contact to Fe cation. Fe cation is bound at residue His-268. Residues Gly-278–Arg-294 form a helical membrane-spanning segment.

This sequence belongs to the reaction center PufL/M/PsbA/D family. As to quaternary structure, PSII is composed of 1 copy each of membrane proteins PsbA, PsbB, PsbC, PsbD, PsbE, PsbF, PsbH, PsbI, PsbJ, PsbK, PsbL, PsbM, PsbT, PsbX, PsbY, PsbZ, Psb30/Ycf12, at least 3 peripheral proteins of the oxygen-evolving complex and a large number of cofactors. It forms dimeric complexes. Requires The D1/D2 heterodimer binds P680, chlorophylls that are the primary electron donor of PSII, and subsequent electron acceptors. It shares a non-heme iron and each subunit binds pheophytin, quinone, additional chlorophylls, carotenoids and lipids. There is also a Cl(-1) ion associated with D1 and D2, which is required for oxygen evolution. The PSII complex binds additional chlorophylls, carotenoids and specific lipids. as cofactor.

The protein localises to the plastid. It is found in the chloroplast thylakoid membrane. The catalysed reaction is 2 a plastoquinone + 4 hnu + 2 H2O = 2 a plastoquinol + O2. Photosystem II (PSII) is a light-driven water:plastoquinone oxidoreductase that uses light energy to abstract electrons from H(2)O, generating O(2) and a proton gradient subsequently used for ATP formation. It consists of a core antenna complex that captures photons, and an electron transfer chain that converts photonic excitation into a charge separation. The D1/D2 (PsbA/PsbD) reaction center heterodimer binds P680, the primary electron donor of PSII as well as several subsequent electron acceptors. D2 is needed for assembly of a stable PSII complex. The polypeptide is Photosystem II D2 protein (Chlorella vulgaris (Green alga)).